Reading from the N-terminus, the 221-residue chain is Endonuclease V (221 aa).

Mg(2+) is bound by residues Asp-44 and Asp-112.

Belongs to the endonuclease V family. Mg(2+) is required as a cofactor.

The protein localises to the cytoplasm. It carries out the reaction Endonucleolytic cleavage at apurinic or apyrimidinic sites to products with a 5'-phosphate.. Functionally, DNA repair enzyme involved in the repair of deaminated bases. Selectively cleaves double-stranded DNA at the second phosphodiester bond 3' to a deoxyinosine leaving behind the intact lesion on the nicked DNA. This chain is Endonuclease V, found in Trichormus variabilis (strain ATCC 29413 / PCC 7937) (Anabaena variabilis).